The following is a 368-amino-acid chain: WD repeat-containing protein 53 homolog (368 aa).

6 WD repeats span residues 27–66 (GHKDTVLCISSHNKKEIIASGSDDCTVRIWDLNTNKSIQS), 71–108 (FQGNPVNNVCFDQDFTLYCSYDNIIVSFDLRQPNVILK), 116–155 (FNTEEINQLSFDSKYQYLAACDDSGQTKIIDVTKNKLVES), 159–199 (KHTN…VLHR), 228–267 (LNPPFVTSVDCSNNSKYVAISMGDGTIVINEISSFKQYLK), and 271–315 (IHKS…NTKV). A disordered region spans residues 207–231 (LPQNISKSQQQQQETTEPNRMLNPP).

It belongs to the WD repeat WDR53 family.

This is WD repeat-containing protein 53 homolog (wdr53) from Dictyostelium discoideum (Social amoeba).